A 901-amino-acid polypeptide reads, in one-letter code: MLIPSKLSRPVRLDHTVVRERLLAKLSGANNFRLALVTSPAGYGKTTLVSQWAAGKNELGWYSLDEGDNQQERFASYLIAAIQQATGGHCSTSEAMAQKRQYASLTSLFAQLFIELAQWHRPLYLVIDDYHLITNPVIHDAMRFFLRHQPENFTLVVLSRNLPQLGIANLRVRDQLLEIGSQQLAFNHQEAKQFFDRRLSSPIEAAESSRMCDDVAGWATALQLIALSARQNHTSAHHSARRLAGINASHLSDYLVDEVLDNVDVSTRHFLLKSAILRSMNDALIVRVTGEENGQMRLEEIERQGLFLQRMDDTGEWFSYHPLFGSFLRQRCQWELAAELPEIHRAAAESWMEQGFPSEAIHHALAAGDAQMLRDILLNHAWGLFNHSELALLEESLKALPWESLLENPRLVLLQAWLMQSQHRYSEVNTLLARAEQEIKGVMDGTLHAEFNALRAQVAINDGNPEEAERLAKLALDELPLAWFYSRIVATSVHGEVLHCKGDLSQSLSLMQQTEQMARHHDVWHYALWSLIQQSEIQFAQGFLQAAWETQERAFQLIKEQHLEQLPMHEFLVRIRAQLLWAWARLDEAEASARSGIAVLSTFQPQQQLQCLTLLVQCSLARGDLDNARSQLNRLENLLGNGRYHCDWISNADKVRVIYWQLTGDKKSAANWLRHTPKPAFANNHFLQGQWRNIARAQILLGEFEPAEIVLEELNENARSLRLMSDLNCNLLLLNQLYWQSGRKNDAQRVLLDALQLANRTGFISHFVIEGEAMAQQLRQLIQLNTLPEMEQHRAQRILREINQHHRHKFAHFDEGFVERLLNHPDVPELIRTSPLTQREWQVLGLIYSGYSNEQIAGELAVAATTIKTHIRNLYQKLGVAHRQDAVQHAQQLLKMMGYGV.

ATP is bound at residue 39–46 (SPAGYGKT). The region spanning 829-894 (ELIRTSPLTQ…DAVQHAQQLL (66 aa)) is the HTH luxR-type domain. Residues 853–872 (NEQIAGELAVAATTIKTHIR) constitute a DNA-binding region (H-T-H motif).

It belongs to the MalT family. In terms of assembly, monomer in solution. Oligomerizes to an active state in the presence of the positive effectors ATP and maltotriose.

With respect to regulation, activated by ATP and maltotriose, which are both required for DNA binding. In terms of biological role, positively regulates the transcription of the maltose regulon whose gene products are responsible for uptake and catabolism of malto-oligosaccharides. Specifically binds to the promoter region of its target genes, recognizing a short DNA motif called the MalT box. The polypeptide is HTH-type transcriptional regulator MalT (Salmonella typhimurium (strain LT2 / SGSC1412 / ATCC 700720)).